A 234-amino-acid chain; its full sequence is uncharacterized protein (234 aa).

3 helical membrane-spanning segments follow: residues 32–52 (GLRTNTLVAIGAALFVIVSVL), 62–82 (IPAQIVSGIGFLAGGVILKEG), and 106–126 (QGLFSEAVLGSMMVLVANIAL).

It belongs to the MgtC/SapB family.

It localises to the cell membrane. This is an uncharacterized protein from Synechocystis sp. (strain ATCC 27184 / PCC 6803 / Kazusa).